Here is a 129-residue protein sequence, read N- to C-terminus: MVRIAGTDIPDNKQVYFSLQYIFGIGPARSEKVLVQAGVDKAIRVNKLTDEEINRLREIIDKEYRVEGDLRKEIALNIKRLIDIGCYRGNRHKHNLPVRGQRTKTNARTRRGPRKTVAGRGQKRGATKK.

Over residues 92-114 (HKHNLPVRGQRTKTNARTRRGPR) the composition is skewed to basic residues. The segment at 92 to 129 (HKHNLPVRGQRTKTNARTRRGPRKTVAGRGQKRGATKK) is disordered.

It belongs to the universal ribosomal protein uS13 family. Part of the 30S ribosomal subunit. Forms a loose heterodimer with protein S19. Forms two bridges to the 50S subunit in the 70S ribosome.

Functionally, located at the top of the head of the 30S subunit, it contacts several helices of the 16S rRNA. In the 70S ribosome it contacts the 23S rRNA (bridge B1a) and protein L5 of the 50S subunit (bridge B1b), connecting the 2 subunits; these bridges are implicated in subunit movement. Contacts the tRNAs in the A and P-sites. The polypeptide is Small ribosomal subunit protein uS13 (Dehalococcoides mccartyi (strain ATCC BAA-2266 / KCTC 15142 / 195) (Dehalococcoides ethenogenes (strain 195))).